A 118-amino-acid chain; its full sequence is Large ribosomal subunit protein bL20 (118 aa).

This sequence belongs to the bacterial ribosomal protein bL20 family.

Binds directly to 23S ribosomal RNA and is necessary for the in vitro assembly process of the 50S ribosomal subunit. It is not involved in the protein synthesizing functions of that subunit. This Desulforamulus reducens (strain ATCC BAA-1160 / DSM 100696 / MI-1) (Desulfotomaculum reducens) protein is Large ribosomal subunit protein bL20.